The primary structure comprises 152 residues: Single-stranded DNA-binding protein, mitochondrial (152 aa).

The N-terminal 16 residues, 1 to 16 (MFRRPVLQVFRQFVRH), are a transit peptide targeting the mitochondrion. The SSB domain maps to 30-141 (LNRVQLLGRV…IIAGKKLVVH (112 aa)). Residues Ser67 and Ser79 each carry the phosphoserine modification. At Lys113 the chain carries N6-acetyllysine. Lys122 carries the N6-succinyllysine modification.

In terms of assembly, homotetramer. Interacts with MPG/AAG, through inhibition of its glycosylase activity it potentially prevents formation of DNA breaks in ssDNA, ensuring that base removal primarily occurs in dsDNA. Interacts with POLDIP2. Interacts with PRIMPOL. As to expression, expressed in all the layers of the retina (at protein level).

It is found in the mitochondrion. Its subcellular location is the mitochondrion matrix. The protein resides in the mitochondrion nucleoid. Functionally, binds preferentially and cooperatively to pyrimidine rich single-stranded DNA (ss-DNA). In vitro, required to maintain the copy number of mitochondrial DNA (mtDNA) and plays a crucial role during mtDNA replication by stimulating the activity of the replisome components POLG and TWNK at the replication fork. Promotes the activity of the gamma complex polymerase POLG, largely by organizing the template DNA and eliminating secondary structures to favor ss-DNA conformations that facilitate POLG activity. In addition it is able to promote the 5'-3' unwinding activity of the mtDNA helicase TWNK. May also function in mtDNA repair. This Mus musculus (Mouse) protein is Single-stranded DNA-binding protein, mitochondrial (Ssbp1).